The following is a 258-amino-acid chain: Glucanase inhibitor protein 3 (258 aa).

An N-terminal signal peptide occupies residues 1–19 (MKIISAVAASSIALGAVSA). The region spanning 29–256 (VLGGAVVPSG…ALEWINSITK (228 aa)) is the Peptidase S1 domain. C56 and C72 form a disulfide bridge. 3 N-linked (GlcNAc...) asparagine glycosylation sites follow: N90, N105, and N110. Intrachain disulfides connect C180–C192 and C202–C233.

This sequence belongs to the peptidase S1 family. In terms of assembly, forms an apoplastic complex with host endoglucanases in tomato leaves during P.infestans infection.

Its subcellular location is the secreted. In terms of biological role, secreted effector that suppresses host plant glucan elicitor-mediated defense responses. Targets host endoglucanases and inhibits the endoglucanase-mediated release of elicitor-active glucan oligosaccharides from P.infestans cell walls. This Phytophthora infestans (Potato late blight agent) protein is Glucanase inhibitor protein 3.